A 451-amino-acid polypeptide reads, in one-letter code: MVSSRRNTGGIQRDGSLRDWSEFVDPSPSPKLLYSQSYVAMRGLLSSLVSMDFALLSSRLKSAWAAILSQRHTRSPERSKSRGLSCKRLAFHLFVCFMVGIFIGFMPFFSVDVSQKIVSENGRLPFDEGAVDRGMVDGKVKELETIVVEKEVDIIDESEVEESPPVPAMLDDEADFVESAPAIPDINDLDITVRKLLIIVTITTVRPQQAYYLNRLAHVLKTVQSPLLWLVVEWPDQSFQTAEILRSSGVMYRHLICRKNTTSVRKIAVCQRNTAIYHIKKHRLDGIMHFADEERSYMSDVFEEMRKIRRFGAWPVAIHTGIKYRVVLEGPICKGNRVTGWNTIQNIQKKSAVRRFPVGFSGFAFNSTMLWDPERWNRPPMDSVIVHSGGRGGLQESRFIEKLVKHERQIEGLPEDCNRVMVWNFNLEPPLLNVPPGWSLHKNLDAVIPVT.

Topologically, residues 1–88 (MVSSRRNTGG…SKSRGLSCKR (88 aa)) are cytoplasmic. The helical; Signal-anchor for type II membrane protein transmembrane segment at 89–109 (LAFHLFVCFMVGIFIGFMPFF) threads the bilayer. Over 110-451 (SVDVSQKIVS…KNLDAVIPVT (342 aa)) the chain is Lumenal. Asparagine 260 and asparagine 366 each carry an N-linked (GlcNAc...) asparagine glycan.

The protein belongs to the glycosyltransferase 43 family.

Its subcellular location is the golgi apparatus membrane. Functionally, probable beta-1,4-xylosyltransferase involved in xylan biosynthesis in cell walls. This Oryza sativa subsp. japonica (Rice) protein is Probable beta-1,4-xylosyltransferase GT43E.